The chain runs to 566 residues: MEEIEELIYKYALQNAYKHGGKAQDKAVVSKIFVERPDLRSRAKEISEIAKKIVEKVNSMSIQDQERELKEKYPDLLEEKKKEEPEKKTLPPIKVEGKFVTRFAPNPDGPIHLGNARAAIISYKYAEMYKGEFILRFDDTDPKVKKPIKEAYDWIRKDLKWLGIKWDKEVKASERLEFYYSMAKELISKGFAYVDTCSEEEFKKMRDASKPCPNRLKSAEDNLYLFEKMLNGEFKEGEAVVRIKTDLSLPDPSQRDWVLLRIIDVKKNPHPITGDKYWIWPTYNFASALDDHDLGITHIFRGKEHEVNAEKQKWIYNYMGWKYPYVEEFGRLRLEGFMMSKSKIRTVLEKGVSIDDPRLPTLAGLRRRGILPETIIETIITVGLKVSDATISFDNLAALNRKKLDPIAKRLMFVQQPKEFIIELSEPIRAKIPYNPSKPSEYREILVNPGDKILLDAKDAEEGAVVRLMELCNVTISGNKLIFHSKTLEDAKKLNAKIIQWVKKDEASNVEVIIPDPNEEKPPISGYGEKEIGNLKINEIVQFIRFGFVRVDNKIDNKVTVIFSHE.

The 'HIGH' region signature appears at 105-115 (PNPDGPIHLGN).

Belongs to the class-I aminoacyl-tRNA synthetase family. Glutamate--tRNA ligase type 2 subfamily.

It localises to the cytoplasm. It carries out the reaction tRNA(Glu) + L-glutamate + ATP = L-glutamyl-tRNA(Glu) + AMP + diphosphate. Functionally, catalyzes the attachment of glutamate to tRNA(Glu) in a two-step reaction: glutamate is first activated by ATP to form Glu-AMP and then transferred to the acceptor end of tRNA(Glu). The chain is Glutamate--tRNA ligase from Sulfurisphaera tokodaii (strain DSM 16993 / JCM 10545 / NBRC 100140 / 7) (Sulfolobus tokodaii).